The primary structure comprises 174 residues: NADH-quinone oxidoreductase subunit B (174 aa).

[4Fe-4S] cluster-binding residues include C51, C52, C116, and C146.

It belongs to the complex I 20 kDa subunit family. NDH-1 is composed of 14 different subunits. Subunits NuoB, C, D, E, F, and G constitute the peripheral sector of the complex. The cofactor is [4Fe-4S] cluster.

The protein resides in the cell inner membrane. It catalyses the reaction a quinone + NADH + 5 H(+)(in) = a quinol + NAD(+) + 4 H(+)(out). NDH-1 shuttles electrons from NADH, via FMN and iron-sulfur (Fe-S) centers, to quinones in the respiratory chain. The immediate electron acceptor for the enzyme in this species is believed to be ubiquinone. Couples the redox reaction to proton translocation (for every two electrons transferred, four hydrogen ions are translocated across the cytoplasmic membrane), and thus conserves the redox energy in a proton gradient. In Anaplasma phagocytophilum (strain HZ), this protein is NADH-quinone oxidoreductase subunit B.